Here is a 391-residue protein sequence, read N- to C-terminus: MQQQSPPTAPQQQQQQQRERETYQLDHIGVHCNVTDCRVLDFLPFNCDLCNLSFCMEHKGYENHKCKNIEQRENKIVHPCPVCNCLIKVDSLANLDQTVRFIISVHMDTDCKFNQSKAPKSFKCSLKTCKTSEFVEVKCDKCKSNYCLKHRFPTNHSCTGKPIINSLSKPINTTINNNINNNTNNINNNINNNKNNNNNNNNNNNNNNNNNNNNNNNNNNNNNNNNNNNNNSNNNNKLIYPGNIKKNIVEDKQYYLEQKNQKSELQKLREEQNQRYKSSEEIGEIGIIQTNGARIQYDFMATDTLRSVQKFINSNRTDGTCSYALCTQPTGNPFTLNQLNLSIRQLGLLPVSTLYMLPLDNSNNFNNSGNNNNNSSDQSLLSYLNPFKYFK.

Residues 1 to 16 are compositionally biased toward low complexity; it reads MQQQSPPTAPQQQQQQ. Positions 1 to 20 are disordered; sequence MQQQSPPTAPQQQQQQQRER. 2 AN1-type zinc fingers span residues 26–74 and 118–166; these read DHIG…QREN and APKS…IINS. Zn(2+)-binding residues include cysteine 32, cysteine 37, cysteine 47, cysteine 50, cysteine 55, histidine 58, histidine 64, cysteine 66, cysteine 124, cysteine 129, cysteine 139, cysteine 142, cysteine 147, histidine 150, histidine 156, and cysteine 158. Low complexity predominate over residues 185 to 236; the sequence is NINNNINNNKNNNNNNNNNNNNNNNNNNNNNNNNNNNNNNNNNNNNNSNNNN. A disordered region spans residues 185 to 240; the sequence is NINNNINNNKNNNNNNNNNNNNNNNNNNNNNNNNNNNNNNNNNNNNNSNNNNKLIY. Positions 278–356 constitute a UBX domain; the sequence is SSEEIGEIGI…GLLPVSTLYM (79 aa).

This is AN1-type zinc finger and UBX domain-containing protein DDB_G0268260 from Dictyostelium discoideum (Social amoeba).